A 680-amino-acid polypeptide reads, in one-letter code: MDRQFKRTLITTALPYANGPVHIGHLAGVYVPADIYARYLRLRGRDCLLIGGSDEHGVPIALKAKAEGCTPQEVVDRYHELIKRSFEGLGISFDIYSRTTSDIHRRTASEFFKTLYEKGEFVEQTSEQYYDEEAKQFLADRYIIGTCPHCSNDRAYGDQCEACGTSLNATDLIDPRSTISGSAPVLRETKHWYLPLDKHEPFLKEWILDGHKEWKSNVYGQCKSWLDMGLQPRAVSRDLDWGIPVPVEGAEGKVLYVWFDAPIGYISNTKELCPDSWETWWKSEDTRLVHFIGKDNIVFHCIVFPAMLRAEGSFILPDNVPANEFLNLEGDKISTSRNWAVWLHEYLEEFPGKQDVLRYVLTANAPETKDNDFTWRDFQARNNNELVAIFGNFVNRALVLTHKYFDGAVPPKGELTDYDSRTIEEFAAVKQALEHQLDTFHFREALKEAMNLARIGNKYLADTEPWKLAKTDMNRVATILNLSLQITANLAIAFEPFLPFSSAKLMSMLSTDCPFGWDRLGSTDLLPEGHVLGNPELLFEKLEDSVIDAQIQKLQDTKLANEKAAHQAAPIAEDIAFEDFLKLDIRVGTVLECEKVPKADKLLRFRIDDGLGGRTIVSGIAKHYAPEELVGKQVCFIANLPPRKLKGIESEGMILSAEDADGSLRVIMPAAEVAPGSQVK.

Residues 15–25 carry the 'HIGH' region motif; the sequence is PYANGPVHIGH. Positions 147, 150, 160, and 163 each coordinate Zn(2+). Positions 332–336 match the 'KMSKS' region motif; sequence KISTS. T335 serves as a coordination point for ATP. The tRNA-binding domain maps to 579 to 680; that stretch reads DFLKLDIRVG…AEVAPGSQVK (102 aa).

The protein belongs to the class-I aminoacyl-tRNA synthetase family. MetG type 1 subfamily. Homodimer. Requires Zn(2+) as cofactor.

It is found in the cytoplasm. It carries out the reaction tRNA(Met) + L-methionine + ATP = L-methionyl-tRNA(Met) + AMP + diphosphate. Functionally, is required not only for elongation of protein synthesis but also for the initiation of all mRNA translation through initiator tRNA(fMet) aminoacylation. The chain is Methionine--tRNA ligase from Porphyromonas gingivalis (strain ATCC 33277 / DSM 20709 / CIP 103683 / JCM 12257 / NCTC 11834 / 2561).